The chain runs to 141 residues: Hemoglobin subunit alpha (141 aa).

A Globin domain is found at 1-141; that stretch reads VLSPEDKNHV…VSTVLTSKYR (141 aa). S3 bears the Phosphoserine mark. Position 7 is an N6-succinyllysine (K7). Residue K16 is modified to N6-acetyllysine; alternate. The residue at position 16 (K16) is an N6-succinyllysine; alternate. Position 24 is a phosphotyrosine (Y24). Position 35 is a phosphoserine (S35). At K40 the chain carries N6-succinyllysine. Phosphoserine is present on S49. H58 contacts O2. H87 contacts heme b. S102 is subject to Phosphoserine. T108 is subject to Phosphothreonine. Phosphoserine occurs at positions 124 and 131. 2 positions are modified to phosphothreonine: T134 and T137. S138 carries the post-translational modification Phosphoserine.

It belongs to the globin family. Heterotetramer of two alpha chains and two beta chains. In terms of tissue distribution, red blood cells.

Involved in oxygen transport from the lung to the various peripheral tissues. Its function is as follows. Hemopressin acts as an antagonist peptide of the cannabinoid receptor CNR1. Hemopressin-binding efficiently blocks cannabinoid receptor CNR1 and subsequent signaling. The protein is Hemoglobin subunit alpha (HBA) of Spalax ehrenbergi (Middle East blind mole rat).